The sequence spans 273 residues: Large ribosomal subunit protein uL2 (273 aa).

2 disordered regions span residues 28-53 and 221-273; these read KPFA…TTRH and RGTA…RRSK. A compositionally biased stretch (low complexity) spans 39 to 48; it reads KSGGRNNNGR. N6-acetyllysine is present on Lys242.

The protein belongs to the universal ribosomal protein uL2 family. Part of the 50S ribosomal subunit. Forms a bridge to the 30S subunit in the 70S ribosome.

One of the primary rRNA binding proteins. Required for association of the 30S and 50S subunits to form the 70S ribosome, for tRNA binding and peptide bond formation. It has been suggested to have peptidyltransferase activity; this is somewhat controversial. Makes several contacts with the 16S rRNA in the 70S ribosome. The polypeptide is Large ribosomal subunit protein uL2 (Escherichia coli (strain SE11)).